Reading from the N-terminus, the 200-residue chain is Transcriptional repressor NrdR (200 aa).

The segment at C3–C34 is a zinc-finger region. The ATP-cone domain maps to L46 to D136.

It belongs to the NrdR family. The cofactor is Zn(2+).

Its function is as follows. Negatively regulates transcription of bacterial ribonucleotide reductase nrd genes and operons by binding to NrdR-boxes. The sequence is that of Transcriptional repressor NrdR from Bifidobacterium animalis subsp. lactis (strain AD011).